The chain runs to 303 residues: Indole-3-glycerol phosphate synthase (303 aa).

It belongs to the TrpC family.

The catalysed reaction is 1-(2-carboxyphenylamino)-1-deoxy-D-ribulose 5-phosphate + H(+) = (1S,2R)-1-C-(indol-3-yl)glycerol 3-phosphate + CO2 + H2O. It functions in the pathway amino-acid biosynthesis; L-tryptophan biosynthesis; L-tryptophan from chorismate: step 4/5. The sequence is that of Indole-3-glycerol phosphate synthase from Acaryochloris marina (strain MBIC 11017).